A 520-amino-acid polypeptide reads, in one-letter code: Endosomal/lysosomal proton channel TMEM175 (520 aa).

Residues 1–27 (MGENDESEIIEHHDDEEMEKRRPPRTH) are disordered. Residues 1 to 49 (MGENDESEIIEHHDDEEMEKRRPPRTHAQSFLESVASSVKEGHSSTQSS) are Cytoplasmic-facing. Over residues 9 to 21 (IIEHHDDEEMEKR) the composition is skewed to basic and acidic residues. Residues 50 to 72 (HRLLAYSDALISIIATVMILPVA) form a helical membrane-spanning segment. The short motif at 51–57 (RLLAYSD) is the RxxxFSD motif 1 element. At 73–93 (HTKIQEDEELKQSIQALLTTK) the chain is on the lumenal side. A short helix H1-1 region spans residues 74 to 79 (TKIQED). The short helix H2-1 stretch occupies residues 81 to 87 (ELKQSIQ). Residues 94–116 (IAVYLMTFLIVTVAWAAHIRLFQ) traverse the membrane as a helical segment. Over 117–122 (VIERID) the chain is Cytoplasmic. A helical transmembrane segment spans residues 123–144 (DTLALLNLACMMLITFLPYTFS). At 145-154 (LMATFPNNIL) the chain is on the lumenal side. Residues 155–176 (GILLFCACVMVIGLIQALIVLY) form a helical membrane-spanning segment. Residues 177 to 200 (GFSHPFLLNDQIQMSENQAYYKQH) are Cytoplasmic-facing. A run of 2 helical transmembrane segments spans residues 201-221 (ILKV…FSFI) and 222-242 (FFQL…ISQC). Residues 243 to 274 (LKWIRSKAIGGQTDESPDSMPFYTYHPSEPLS) lie on the Cytoplasmic side of the membrane. The helical transmembrane segment at 275 to 299 (KERVEAFSDGVFAIVATLLILDICE) threads the bilayer. Residues 277-283 (RVEAFSD) carry the RxxxFSD motif 2 motif. Topologically, residues 300–326 (GNVPDPSVVKKKFDNSLIAALQEYGPE) are lumenal. Residues 305–313 (PSVVKKKFD) are short helix H1-2. Residues 315–321 (SLIAALQ) form a short helix H2-2 region. A helical membrane pass occupies residues 327 to 349 (YLAYFGSFVTVGLLWFVHHSLFL). Topologically, residues 350–355 (HVTKAT) are cytoplasmic. Residues 356–377 (RLMGLFNTFSLAFVGGLPLAYQ) traverse the membrane as a helical segment. At 378-392 (LTHESPRGSRNELEA) the chain is on the lumenal side. The helical transmembrane segment at 393–413 (VQISCVIIFFASLFQLAIWVT) threads the bilayer. The Cytoplasmic portion of the chain corresponds to 414 to 433 (ALFTERETLHPYVRYGGREH). A helical membrane pass occupies residues 434 to 457 (TFMLAKLSLYPCVALGTFFITCIL). At 458 to 459 (SR) the chain is on the lumenal side. Residues 460–486 (FSAPIFHMMEICIPFAFLLLRLLVRVA) traverse the membrane as a helical segment. Over 487 to 520 (LALLRWLFCSARNDLERIPVEEEESRLPINDIVT) the chain is Cytoplasmic.

Belongs to the TMEM175 family. In terms of assembly, homodimer.

The protein localises to the endosome membrane. It localises to the lysosome membrane. The enzyme catalyses H(+)(in) = H(+)(out). The catalysed reaction is K(+)(in) = K(+)(out). With respect to regulation, active at low pH (under pH 4.6): proton channel activity is activated by luminal side protons. Polyunsaturated fatty acids, such as arachidonic acid, also activate the channel activity. Proton-activated proton channel that catalyzes proton efflux from endosomes and lysosomes to maintain a steady-state pH. Activated at low pH (under pH 4.6) by luminal side protons: selectively mediates lysosomal proton release from lysosomes, eliciting a proton leak that balances V-ATPase activity to maintain pH homeostasis. Regulation of lumenal pH stability is required for autophagosome-lysosome fusion. Also acts as a potassium channel at higher pH, regulating potassium conductance in endosomes and lysosomes. This is Endosomal/lysosomal proton channel TMEM175 from Danio rerio (Zebrafish).